A 357-amino-acid polypeptide reads, in one-letter code: 3-isopropylmalate dehydrogenase (357 aa).

Position 75-88 (75-88 (GPKWDTLPPAERPE)) interacts with NAD(+). Residues Arg96, Arg106, Arg134, and Asp222 each coordinate substrate. Positions 222, 246, and 250 each coordinate Mg(2+). Residue 279–291 (GSAPDIAGQQKAN) participates in NAD(+) binding.

It belongs to the isocitrate and isopropylmalate dehydrogenases family. LeuB type 1 subfamily. In terms of assembly, homodimer. It depends on Mg(2+) as a cofactor. Mn(2+) serves as cofactor.

It is found in the cytoplasm. The enzyme catalyses (2R,3S)-3-isopropylmalate + NAD(+) = 4-methyl-2-oxopentanoate + CO2 + NADH. The protein operates within amino-acid biosynthesis; L-leucine biosynthesis; L-leucine from 3-methyl-2-oxobutanoate: step 3/4. In terms of biological role, catalyzes the oxidation of 3-carboxy-2-hydroxy-4-methylpentanoate (3-isopropylmalate) to 3-carboxy-4-methyl-2-oxopentanoate. The product decarboxylates to 4-methyl-2 oxopentanoate. This Moorella thermoacetica (strain ATCC 39073 / JCM 9320) protein is 3-isopropylmalate dehydrogenase.